Here is a 310-residue protein sequence, read N- to C-terminus: Protein translocase subunit SecF (310 aa).

6 helical membrane passes run 20-42 (FKKVSYTFSIILSLISVISIGIY), 140-160 (IEAGTMAMLFSFLAIMVYIWV), 164-184 (WYFGLGILIALMHDLILALGF), 194-214 (LSTIAAVLTIIGYSVNDSVVI), 246-266 (ILTVITTLLANLALILFGGEA), and 272-292 (VLVFFGIIAGTYSSIFISAPI).

This sequence belongs to the SecD/SecF family. SecF subfamily. As to quaternary structure, forms a complex with SecD. Part of the essential Sec protein translocation apparatus which comprises SecA, SecYEG and auxiliary proteins SecDF-YajC and YidC.

It localises to the cell inner membrane. Functionally, part of the Sec protein translocase complex. Interacts with the SecYEG preprotein conducting channel. SecDF uses the proton motive force (PMF) to complete protein translocation after the ATP-dependent function of SecA. This Rickettsia canadensis (strain McKiel) protein is Protein translocase subunit SecF.